We begin with the raw amino-acid sequence, 376 residues long: D-alanine--D-alanine ligase B (376 aa).

In terms of domain architecture, ATP-grasp spans 155–361 (KRLMRDAGLP…QTDLMDKLIA (207 aa)). 184–239 (AALGTPDLFVKPANLGSSVGVSRARSEEEFAASCALAFRYDRKILVEQALNGAREI) lines the ATP pocket. Mg(2+)-binding residues include D316, E328, and N330.

It belongs to the D-alanine--D-alanine ligase family. Requires Mg(2+) as cofactor. Mn(2+) serves as cofactor.

It localises to the cytoplasm. The catalysed reaction is 2 D-alanine + ATP = D-alanyl-D-alanine + ADP + phosphate + H(+). Its pathway is cell wall biogenesis; peptidoglycan biosynthesis. Cell wall formation. In Bradyrhizobium diazoefficiens (strain JCM 10833 / BCRC 13528 / IAM 13628 / NBRC 14792 / USDA 110), this protein is D-alanine--D-alanine ligase B.